Reading from the N-terminus, the 127-residue chain is Protein ApaG (127 aa).

The region spanning 3-127 (NNPSSKIEVA…FVLSVPRTLH (125 aa)) is the ApaG domain.

The chain is Protein ApaG from Xylella fastidiosa (strain M23).